Here is a 465-residue protein sequence, read N- to C-terminus: Cysteine--tRNA ligase (465 aa).

Cysteine 27 is a binding site for Zn(2+). The 'HIGH' region motif lies at proline 29 to histidine 39. Positions 207, 237, and 241 each coordinate Zn(2+). The 'KMSKS' region motif lies at lysine 269 to serine 273. An ATP-binding site is contributed by lysine 272.

It belongs to the class-I aminoacyl-tRNA synthetase family. In terms of assembly, monomer. Zn(2+) serves as cofactor.

Its subcellular location is the cytoplasm. It carries out the reaction tRNA(Cys) + L-cysteine + ATP = L-cysteinyl-tRNA(Cys) + AMP + diphosphate. The polypeptide is Cysteine--tRNA ligase (cysS) (Helicobacter pylori (strain ATCC 700392 / 26695) (Campylobacter pylori)).